A 947-amino-acid polypeptide reads, in one-letter code: Protein translocase subunit SecA 1 (947 aa).

ATP is bound by residues Gln83, 101-105, and Asp490; that span reads GEGKT. Positions 860–947 are disordered; sequence AKAQEQTGQG…KTSKPTRRRG (88 aa). The span at 925-934 shows a compositional bias: basic and acidic residues; it reads TRRERREAAR. Basic residues predominate over residues 935-947; that stretch reads KQAKTSKPTRRRG.

It belongs to the SecA family. Monomer and homodimer. Part of the essential Sec protein translocation apparatus which comprises SecA, SecYEG and auxiliary proteins SecDF. Other proteins may also be involved.

The protein resides in the cell membrane. It localises to the cytoplasm. The enzyme catalyses ATP + H2O + cellular proteinSide 1 = ADP + phosphate + cellular proteinSide 2.. Functionally, part of the Sec protein translocase complex. Interacts with the SecYEG preprotein conducting channel. Has a central role in coupling the hydrolysis of ATP to the transfer of proteins into and across the cell membrane, serving as an ATP-driven molecular motor driving the stepwise translocation of polypeptide chains across the membrane. The sequence is that of Protein translocase subunit SecA 1 from Mycobacterium sp. (strain JLS).